Reading from the N-terminus, the 444-residue chain is Elongation factor 1-alpha (444 aa).

The tr-type G domain occupies 15-236; sequence KPHINLAVVG…VLDTFQPPPR (222 aa). Positions 24-31 are G1; the sequence is GHVDNGKS. 24 to 31 is a binding site for GTP; that stretch reads GHVDNGKS. Mg(2+) is bound at residue Ser31. The segment at 80 to 84 is G2; sequence GVTIE. Residues 101-104 are G3; sequence DLPG. GTP contacts are provided by residues 101–105 and 163–166; these read DLPGH and NKMD. Residues 163 to 166 form a G4 region; the sequence is NKMD. The G5 stretch occupies residues 202-204; that stretch reads SAI.

This sequence belongs to the TRAFAC class translation factor GTPase superfamily. Classic translation factor GTPase family. EF-Tu/EF-1A subfamily.

The protein localises to the cytoplasm. The enzyme catalyses GTP + H2O = GDP + phosphate + H(+). Its function is as follows. GTP hydrolase that promotes the GTP-dependent binding of aminoacyl-tRNA to the A-site of ribosomes during protein biosynthesis. This Pyrobaculum calidifontis (strain DSM 21063 / JCM 11548 / VA1) protein is Elongation factor 1-alpha.